The chain runs to 91 residues: UPF0250 protein mma_3250 (91 aa).

This sequence belongs to the UPF0250 family.

The sequence is that of UPF0250 protein mma_3250 from Janthinobacterium sp. (strain Marseille) (Minibacterium massiliensis).